The following is a 315-amino-acid chain: Probable cytochrome c oxidase subunit 2 (315 aa).

The RPE1 insert domain occupies 6 to 53 (RHLSKPAYREEFKGDTSPRTAAYISNRADASLGSTYKLPLEAKFWKMS). 3 consecutive transmembrane segments (helical) span residues 41 to 61 (YKLP…CFLI), 96 to 116 (LLYI…FVCI), and 133 to 153 (VLIE…IAVP). The Cu cation site is built by His235, Cys270, Cys274, and His278.

This sequence belongs to the cytochrome c oxidase subunit 2 family. It depends on Cu cation as a cofactor. Heme is required as a cofactor.

The protein localises to the cell membrane. It carries out the reaction 4 Fe(II)-[cytochrome c] + O2 + 8 H(+)(in) = 4 Fe(III)-[cytochrome c] + 2 H2O + 4 H(+)(out). Functionally, subunits I and II form the functional core of the enzyme complex. Electrons originating in cytochrome c are transferred via heme a and Cu(A) to the binuclear center formed by heme a3 and Cu(B). This chain is Probable cytochrome c oxidase subunit 2 (ctaC), found in Rickettsia felis (strain ATCC VR-1525 / URRWXCal2) (Rickettsia azadi).